The sequence spans 96 residues: Phosphoribosyl-ATP pyrophosphatase (96 aa).

It belongs to the PRA-PH family.

The protein resides in the cytoplasm. It carries out the reaction 1-(5-phospho-beta-D-ribosyl)-ATP + H2O = 1-(5-phospho-beta-D-ribosyl)-5'-AMP + diphosphate + H(+). It participates in amino-acid biosynthesis; L-histidine biosynthesis; L-histidine from 5-phospho-alpha-D-ribose 1-diphosphate: step 2/9. The protein is Phosphoribosyl-ATP pyrophosphatase of Methanobrevibacter smithii (strain ATCC 35061 / DSM 861 / OCM 144 / PS).